The chain runs to 158 residues: 2-C-methyl-D-erythritol 2,4-cyclodiphosphate synthase (158 aa).

A divalent metal cation-binding residues include Asp-9 and His-11. Residues 9-11 and 35-36 contribute to the 4-CDP-2-C-methyl-D-erythritol 2-phosphate site; these read DVH and HS. His-43 contacts a divalent metal cation. 4-CDP-2-C-methyl-D-erythritol 2-phosphate-binding positions include 57–59, 62–66, 133–136, Phe-140, and Arg-143; these read DIG, FPDTD, and TTTE.

This sequence belongs to the IspF family. In terms of assembly, homotrimer. A divalent metal cation is required as a cofactor.

It catalyses the reaction 4-CDP-2-C-methyl-D-erythritol 2-phosphate = 2-C-methyl-D-erythritol 2,4-cyclic diphosphate + CMP. The protein operates within isoprenoid biosynthesis; isopentenyl diphosphate biosynthesis via DXP pathway; isopentenyl diphosphate from 1-deoxy-D-xylulose 5-phosphate: step 4/6. Functionally, involved in the biosynthesis of isopentenyl diphosphate (IPP) and dimethylallyl diphosphate (DMAPP), two major building blocks of isoprenoid compounds. Catalyzes the conversion of 4-diphosphocytidyl-2-C-methyl-D-erythritol 2-phosphate (CDP-ME2P) to 2-C-methyl-D-erythritol 2,4-cyclodiphosphate (ME-CPP) with a corresponding release of cytidine 5-monophosphate (CMP). The polypeptide is 2-C-methyl-D-erythritol 2,4-cyclodiphosphate synthase (Actinobacillus succinogenes (strain ATCC 55618 / DSM 22257 / CCUG 43843 / 130Z)).